A 302-amino-acid chain; its full sequence is Haloalkane dehalogenase (302 aa).

Positions 48–150 constitute an AB hydrolase-1 domain; sequence PVLLMHGEPS…AGLVIANTGL (103 aa). D123 acts as the Nucleophile in catalysis. D249 functions as the Proton donor in the catalytic mechanism. H278 (proton acceptor) is an active-site residue.

This sequence belongs to the haloalkane dehalogenase family. Type 1 subfamily. In terms of assembly, monomer.

It carries out the reaction 1-haloalkane + H2O = a halide anion + a primary alcohol + H(+). In terms of biological role, catalyzes hydrolytic cleavage of carbon-halogen bonds in halogenated aliphatic compounds, leading to the formation of the corresponding primary alcohols, halide ions and protons. The polypeptide is Haloalkane dehalogenase (Caulobacter sp. (strain K31)).